The following is a 95-amino-acid chain: Aspartyl/glutamyl-tRNA(Asn/Gln) amidotransferase subunit C (95 aa).

It belongs to the GatC family. Heterotrimer of A, B and C subunits.

The catalysed reaction is L-glutamyl-tRNA(Gln) + L-glutamine + ATP + H2O = L-glutaminyl-tRNA(Gln) + L-glutamate + ADP + phosphate + H(+). It carries out the reaction L-aspartyl-tRNA(Asn) + L-glutamine + ATP + H2O = L-asparaginyl-tRNA(Asn) + L-glutamate + ADP + phosphate + 2 H(+). Functionally, allows the formation of correctly charged Asn-tRNA(Asn) or Gln-tRNA(Gln) through the transamidation of misacylated Asp-tRNA(Asn) or Glu-tRNA(Gln) in organisms which lack either or both of asparaginyl-tRNA or glutaminyl-tRNA synthetases. The reaction takes place in the presence of glutamine and ATP through an activated phospho-Asp-tRNA(Asn) or phospho-Glu-tRNA(Gln). The sequence is that of Aspartyl/glutamyl-tRNA(Asn/Gln) amidotransferase subunit C from Brucella melitensis biotype 2 (strain ATCC 23457).